A 187-amino-acid chain; its full sequence is Protein GrpE (187 aa).

The interval 1 to 23 is disordered; it reads MADEQNLDAQAQDQAAEAGAGEE. Low complexity predominate over residues 7-23; that stretch reads LDAQAQDQAAEAGAGEE.

This sequence belongs to the GrpE family. In terms of assembly, homodimer.

The protein localises to the cytoplasm. Its function is as follows. Participates actively in the response to hyperosmotic and heat shock by preventing the aggregation of stress-denatured proteins, in association with DnaK and GrpE. It is the nucleotide exchange factor for DnaK and may function as a thermosensor. Unfolded proteins bind initially to DnaJ; upon interaction with the DnaJ-bound protein, DnaK hydrolyzes its bound ATP, resulting in the formation of a stable complex. GrpE releases ADP from DnaK; ATP binding to DnaK triggers the release of the substrate protein, thus completing the reaction cycle. Several rounds of ATP-dependent interactions between DnaJ, DnaK and GrpE are required for fully efficient folding. The polypeptide is Protein GrpE (Pseudomonas savastanoi pv. phaseolicola (strain 1448A / Race 6) (Pseudomonas syringae pv. phaseolicola (strain 1448A / Race 6))).